The sequence spans 216 residues: Large ribosomal subunit protein bL25 (216 aa).

The interval 191–216 (LVSAESEEDEDAPAADEVPATEVSEE) is disordered. The span at 195-204 (ESEEDEDAPA) shows a compositional bias: acidic residues.

This sequence belongs to the bacterial ribosomal protein bL25 family. CTC subfamily. As to quaternary structure, part of the 50S ribosomal subunit; part of the 5S rRNA/L5/L18/L25 subcomplex. Contacts the 5S rRNA. Binds to the 5S rRNA independently of L5 and L18.

Functionally, this is one of the proteins that binds to the 5S RNA in the ribosome where it forms part of the central protuberance. This is Large ribosomal subunit protein bL25 from Jannaschia sp. (strain CCS1).